The sequence spans 837 residues: Tuftelin-interacting protein 11 (837 aa).

2 stretches are compositionally biased toward basic and acidic residues: residues 1 to 13 and 44 to 64; these read MSLS…GEGH and QTKE…EERP. Disordered stretches follow at residues 1 to 21, 34 to 73, and 85 to 135; these read MSLS…DDER, EFNP…RARD, and LKKG…FAGG. The interval 1-50 is required for interaction with DHX15; that stretch reads MSLSHLYRDGEGHLDDDDDERENFEITDWDLQNEFNPNRQRHWQTKEEAT. Residues S2, S59, S95, and S98 each carry the phosphoserine modification. Positions 91–100 are enriched in acidic residues; the sequence is EEADSEDSDA. A compositionally biased stretch (basic and acidic residues) spans 101-116; that stretch reads EEKPVKQEDFPKDLGP. S144 carries the phosphoserine modification. The region spanning 149-195 is the G-patch domain; it reads TKGIGQKLLQKMGYVPGRGLGKNAQGIINPIEAKQRKGKGAVGAYGS. Residues 183–236 form a disordered region; it reads QRKGKGAVGAYGSERTTQSLQDFPVADSEEEAEEEFQKELSQWRKDPSGSKKKP. S210 carries the phosphoserine modification. The span at 217–231 shows a compositional bias: basic and acidic residues; the sequence is EFQKELSQWRKDPSG. The Nuclear localization signal motif lies at 700-705; that stretch reads VKDKFN. Residues 710–734 are required for nuclear speckle localization; sequence IMNRAVSSNVGAYMQPGARENIAYL.

This sequence belongs to the TFP11/STIP family. In terms of assembly, identified in the spliceosome C complex. Found in the Intron Large (IL) complex, a post-mRNA release spliceosomal complex containing the excised intron, U2, U5 and U6 snRNPs, and splicing factors. Interacts with TUFT1. Interacts with DHX15; indicative for a recruitment of DHX15 to the IL complex. Interacts with GCFC2.

The protein resides in the cytoplasm. It localises to the nucleus. Its function is as follows. Involved in pre-mRNA splicing, specifically in spliceosome disassembly during late-stage splicing events. Intron turnover seems to proceed through reactions in two lariat-intron associated complexes termed Intron Large (IL) and Intron Small (IS). In cooperation with DHX15 seems to mediate the transition of the U2, U5 and U6 snRNP-containing IL complex to the snRNP-free IS complex leading to efficient debranching and turnover of excised introns. May play a role in the differentiation of ameloblasts and odontoblasts or in the forming of the enamel extracellular matrix. This is Tuftelin-interacting protein 11 (Tfip11) from Rattus norvegicus (Rat).